Reading from the N-terminus, the 143-residue chain is MNSLSILNNIEDKVVEAINTAALSLESLSASLDIENTNENFSKFQTQSDKFYNLVKKDIHKGLIDFIDSMTDIAPFDHSSYLKKSELEVSHNFTEIILSHLEDLNNIVENNQEKQEKEKQEKEKLEKEKLEKEKQQSNEMNID.

Residues 97 to 143 (ILSHLEDLNNIVENNQEKQEKEKQEKEKLEKEKLEKEKQQSNEMNID) adopt a coiled-coil conformation. Residues 109-143 (ENNQEKQEKEKQEKEKLEKEKLEKEKQQSNEMNID) form a disordered region. Residues 111-136 (NQEKQEKEKQEKEKLEKEKLEKEKQQ) are compositionally biased toward basic and acidic residues.

This sequence belongs to the Mediator complex subunit 11 family. In terms of assembly, component of the Mediator complex.

The protein resides in the nucleus. In terms of biological role, component of the Mediator complex, a coactivator involved in the regulated transcription of nearly all RNA polymerase II-dependent genes. Mediator functions as a bridge to convey information from gene-specific regulatory proteins to the basal RNA polymerase II transcription machinery. Mediator is recruited to promoters by direct interactions with regulatory proteins and serves as a scaffold for the assembly of a functional pre-initiation complex with RNA polymerase II and the general transcription factors. The protein is Putative mediator of RNA polymerase II transcription subunit 11 (med11) of Dictyostelium discoideum (Social amoeba).